We begin with the raw amino-acid sequence, 282 residues long: 2-dehydro-3-deoxyphosphooctonate aldolase (282 aa).

This sequence belongs to the KdsA family.

It localises to the cytoplasm. The enzyme catalyses D-arabinose 5-phosphate + phosphoenolpyruvate + H2O = 3-deoxy-alpha-D-manno-2-octulosonate-8-phosphate + phosphate. Its pathway is carbohydrate biosynthesis; 3-deoxy-D-manno-octulosonate biosynthesis; 3-deoxy-D-manno-octulosonate from D-ribulose 5-phosphate: step 2/3. It participates in bacterial outer membrane biogenesis; lipopolysaccharide biosynthesis. The sequence is that of 2-dehydro-3-deoxyphosphooctonate aldolase from Shewanella baltica (strain OS185).